The following is a 350-amino-acid chain: Protein RecA (350 aa).

Residue glycine 67–threonine 74 coordinates ATP.

The protein belongs to the RecA family.

It localises to the cytoplasm. Can catalyze the hydrolysis of ATP in the presence of single-stranded DNA, the ATP-dependent uptake of single-stranded DNA by duplex DNA, and the ATP-dependent hybridization of homologous single-stranded DNAs. It interacts with LexA causing its activation and leading to its autocatalytic cleavage. This chain is Protein RecA, found in Chromobacterium violaceum (strain ATCC 12472 / DSM 30191 / JCM 1249 / CCUG 213 / NBRC 12614 / NCIMB 9131 / NCTC 9757 / MK).